The chain runs to 143 residues: Hemoglobin subunit alpha-1 (143 aa).

At S2 the chain carries N-acetylserine. The Globin domain occupies 2 to 143 (SLSSKDKATV…RALALAEKYR (142 aa)). H60 provides a ligand contact to O2. Residue H89 coordinates heme b.

This sequence belongs to the globin family. As to quaternary structure, hb 1 is a heterotetramer of two alpha-1 and two beta-1 chains. Hb 3 is a heterotetramer of two alpha-1 and two beta-2 chains. In terms of tissue distribution, red blood cells.

Functionally, involved in oxygen transport from gills to the various peripheral tissues. The sequence is that of Hemoglobin subunit alpha-1 (hba1) from Gadus morhua (Atlantic cod).